The following is a 318-amino-acid chain: Mechanosensory protein 3 (318 aa).

2 consecutive LIM zinc-binding domains span residues 27–86 (NKCY…DYSA) and 87–152 (HRCA…PMDD). The homeobox DNA-binding region spans 214-273 (RRGPRTTIRQNQLDVLNEMFSNTPKPSKHARAKLALETGLSMRVIQVWFQNRRSKERRLK).

Its subcellular location is the nucleus. Functionally, specifies differentiation of the set of six touch receptor neurons. Binds cooperatively as a heterodimer with unc-86 to sites in the mec-3 gene promoter. The chain is Mechanosensory protein 3 (mec-3) from Caenorhabditis briggsae.